The sequence spans 508 residues: Maturase K (508 aa).

This sequence belongs to the intron maturase 2 family. MatK subfamily.

The protein resides in the plastid. The protein localises to the chloroplast. Usually encoded in the trnK tRNA gene intron. Probably assists in splicing its own and other chloroplast group II introns. The protein is Maturase K of Amburana cearensis (Cerejeira).